A 349-amino-acid chain; its full sequence is S-adenosylmethionine:tRNA ribosyltransferase-isomerase (349 aa).

Belongs to the QueA family. In terms of assembly, monomer.

It localises to the cytoplasm. It carries out the reaction 7-aminomethyl-7-carbaguanosine(34) in tRNA + S-adenosyl-L-methionine = epoxyqueuosine(34) in tRNA + adenine + L-methionine + 2 H(+). The protein operates within tRNA modification; tRNA-queuosine biosynthesis. Its function is as follows. Transfers and isomerizes the ribose moiety from AdoMet to the 7-aminomethyl group of 7-deazaguanine (preQ1-tRNA) to give epoxyqueuosine (oQ-tRNA). This is S-adenosylmethionine:tRNA ribosyltransferase-isomerase from Pseudomonas entomophila (strain L48).